The chain runs to 121 residues: Ribosome-binding factor A (121 aa).

It belongs to the RbfA family. Monomer. Binds 30S ribosomal subunits, but not 50S ribosomal subunits or 70S ribosomes.

It is found in the cytoplasm. In terms of biological role, one of several proteins that assist in the late maturation steps of the functional core of the 30S ribosomal subunit. Associates with free 30S ribosomal subunits (but not with 30S subunits that are part of 70S ribosomes or polysomes). Required for efficient processing of 16S rRNA. May interact with the 5'-terminal helix region of 16S rRNA. The polypeptide is Ribosome-binding factor A (Agathobacter rectalis (strain ATCC 33656 / DSM 3377 / JCM 17463 / KCTC 5835 / VPI 0990) (Eubacterium rectale)).